A 99-amino-acid polypeptide reads, in one-letter code: NADH-ubiquinone oxidoreductase chain 4L (99 aa).

Transmembrane regions (helical) follow at residues 1-21 (MTIYSYLLLLCMVMFVTFFTQ), 25-45 (ILSLMVVLESLMLITLSSVAV), and 56-76 (VMILLLCFAAAEAALSLSLLV).

It belongs to the complex I subunit 4L family.

It localises to the mitochondrion membrane. The catalysed reaction is a ubiquinone + NADH + 5 H(+)(in) = a ubiquinol + NAD(+) + 4 H(+)(out). In terms of biological role, core subunit of the mitochondrial membrane respiratory chain NADH dehydrogenase (Complex I) that is believed to belong to the minimal assembly required for catalysis. Complex I functions in the transfer of electrons from NADH to the respiratory chain. The immediate electron acceptor for the enzyme is believed to be ubiquinone. In Albinaria caerulea (Land snail), this protein is NADH-ubiquinone oxidoreductase chain 4L (ND4L).